A 286-amino-acid polypeptide reads, in one-letter code: Quinone oxidoreductase 2 (286 aa).

Residues 6–11 (GATGQL), R33, 73–75 (SSS), 138–143 (GWYSEN), and R171 contribute to the NADP(+) site.

The protein belongs to the NmrA-type oxidoreductase family. As to quaternary structure, monomer.

It carries out the reaction a quinone + NADH + H(+) = a quinol + NAD(+). The catalysed reaction is a quinone + NADPH + H(+) = a quinol + NADP(+). Quinone oxidoreductase that may play some additional role beyond quinone reduction. Potential redox sensor protein. Overexpression induces retardation of growth. This chain is Quinone oxidoreductase 2 (qorB), found in Escherichia coli (strain K12).